The primary structure comprises 397 residues: Elongation factor Tu (397 aa).

One can recognise a tr-type G domain in the interval 10–206 (KPHVNIGTIG…AIDSYIPTPE (197 aa)). The segment at 19–26 (GHVDHGKT) is G1. Position 19–26 (19–26 (GHVDHGKT)) interacts with GTP. Residue Thr-26 coordinates Mg(2+). The interval 60 to 64 (GITIN) is G2. The G3 stretch occupies residues 81 to 84 (DCPG). Residues 81–85 (DCPGH) and 136–139 (NKAD) each bind GTP. The segment at 136 to 139 (NKAD) is G4. Residues 174 to 176 (SAL) are G5.

Belongs to the TRAFAC class translation factor GTPase superfamily. Classic translation factor GTPase family. EF-Tu/EF-1A subfamily. As to quaternary structure, monomer.

Its subcellular location is the cytoplasm. The enzyme catalyses GTP + H2O = GDP + phosphate + H(+). GTP hydrolase that promotes the GTP-dependent binding of aminoacyl-tRNA to the A-site of ribosomes during protein biosynthesis. This chain is Elongation factor Tu, found in Clostridium botulinum (strain ATCC 19397 / Type A).